We begin with the raw amino-acid sequence, 494 residues long: Integrin beta-like protein 1 (494 aa).

Positions 1 to 23 (MHPPGFKNFLLLVSSLFFIGLSA) are cleaved as a signal peptide. 40 disulfides stabilise this stretch: Cys-40-Cys-71, Cys-51-Cys-69, Cys-63-Cys-74, Cys-76-Cys-89, Cys-91-Cys-112, Cys-96-Cys-110, Cys-104-Cys-115, Cys-117-Cys-126, Cys-132-Cys-159, Cys-143-Cys-157, Cys-151-Cys-162, Cys-164-Cys-178, Cys-180-Cys-202, Cys-185-Cys-200, Cys-194-Cys-205, Cys-207-Cys-216, Cys-220-Cys-247, Cys-231-Cys-245, Cys-239-Cys-250, Cys-252-Cys-269, Cys-271-Cys-296, Cys-276-Cys-294, Cys-288-Cys-299, Cys-301-Cys-310, Cys-316-Cys-343, Cys-327-Cys-341, Cys-335-Cys-346, Cys-348-Cys-361, Cys-363-Cys-384, Cys-368-Cys-382, Cys-376-Cys-387, Cys-389-Cys-398, Cys-404-Cys-431, Cys-415-Cys-429, Cys-423-Cys-434, Cys-436-Cys-448, Cys-450-Cys-471, Cys-455-Cys-469, Cys-463-Cys-474, and Cys-476-Cys-485. I-EGF domains are found at residues 40-90 (CRLS…PLCE), 91-127 (CHDW…EACQ), 132-179 (CDLT…KFCE), 180-217 (CDDR…DKCE), 220-270 (CDIT…DTCE), 271-311 (CDER…KKCE), 316-362 (CPLS…KTCE), 363-399 (CDDR…KLCQ), 404-449 (CNMT…EFCD), and 450-486 (CDDR…NACE). One copy of the I repeat lies at 51 to 95 (CRAPGQPPGSALCHDRGRCECGVCICHVTEPGTYFGPLCECHDWV). A cysteine-rich tandem repeats region spans residues 51–494 (CRAPGQPPGS…CEIWLGTEYP (444 aa)). Residues 96 to 142 (CETYDGKTCAGHGTCDCGKCKCDVGWSGEACQYPTKCDLTKKISNQM) form an II repeat. An III repeat occupies 143-184 (CKNSQDVICSNAGTCHCGRCKCDNSDGHGLIYGKFCECDDRE). An IV repeat occupies 185-230 (CIDDETEEICGGHGKCYCGNCYCEAGWHGDKCEFQCDITPWESKRR). A V repeat occupies 231-275 (CTSPDGKVCSNRGTCVCGECSCHDVDPTGDWGDIHGDTCECDERD). One copy of the VI repeat lies at 276–326 (CRAVYDRYSDDFCSGHGQCNCGRCDCRAGWYGKKCEHPKNCPLSAEESTRK). The VII repeat unit spans residues 327 to 367 (CQGSSDLPCSGRGRCECGRCTCYPPGDSRVYGKTCECDDRR). The VIII repeat unit spans residues 368–414 (CEDLDGVVCGGRGTCSCGRCVCEKGWFGKLCQHPRKCNMTEEQSRSL). N-linked (GlcNAc...) asparagine glycosylation is present at Asn-405. Residues 415–454 (CESADGTLCSGKGSCHCGKCICSGEEWYISGEFCDCDDRD) form an IX repeat. One copy of the X repeat lies at 455–494 (CDKHDGLICTGNGICSCGNCECWDGWNGNACEIWLGTEYP).

It localises to the secreted. This Rattus norvegicus (Rat) protein is Integrin beta-like protein 1 (Itgbl1).